Consider the following 473-residue polypeptide: Serine palmitoyltransferase 1 (473 aa).

Over M1–Q15 the chain is Lumenal. The interaction with SPTLC2 stretch occupies residues M1 to P66. A helical transmembrane segment spans residues A16–I36. Topologically, residues R37–L473 are cytoplasmic. The residue at position 164 (Y164) is a Phosphotyrosine; by ABL.

Belongs to the class-II pyridoxal-phosphate-dependent aminotransferase family. Component of the serine palmitoyltransferase (SPT) complex, which is also composed of SPTLC2 or SPTLC3 and SPTSSA or SPTSSB. The heterodimer consisting of SPTLC1 and SPTLC2/SPTLC3 forms the catalytic core of the enzyme, while SPTSSA or SPTSSB subunits determine substrate specificity. SPT also interacts with ORMDL proteins, especially ORMDL3, which negatively regulate SPT activity in the presence of ceramides. Forms dimers of heterodimers with SPTLC2. Interacts with RTN4 (isoform B). Requires pyridoxal 5'-phosphate as cofactor. Post-translationally, phosphorylation at Tyr-164 inhibits activity and promotes cell survival. In terms of tissue distribution, widely expressed. Not detected in small intestine.

The protein resides in the endoplasmic reticulum membrane. It catalyses the reaction L-serine + hexadecanoyl-CoA + H(+) = 3-oxosphinganine + CO2 + CoA. The enzyme catalyses octadecanoyl-CoA + L-serine + H(+) = 3-oxoeicosasphinganine + CO2 + CoA. The catalysed reaction is tetradecanoyl-CoA + L-serine + H(+) = 3-oxohexadecasphinganine + CO2 + CoA. It carries out the reaction dodecanoyl-CoA + L-serine + H(+) = 3-oxotetradecasphinganine + CO2 + CoA. The protein operates within lipid metabolism; sphingolipid metabolism. With respect to regulation, SPT complex catalytic activity is negatively regulated by ORMDL proteins, including ORMDL3, in the presence of ceramides. This mechanism allows to maintain ceramide levels at sufficient concentrations for the production of complex sphingolipids, but which prevents the accumulation of ceramides to levels that trigger apoptosis. Its function is as follows. Component of the serine palmitoyltransferase multisubunit enzyme (SPT) that catalyzes the initial and rate-limiting step in sphingolipid biosynthesis by condensing L-serine and activated acyl-CoA (most commonly palmitoyl-CoA) to form long-chain bases. The SPT complex is also composed of SPTLC2 or SPTLC3 and SPTSSA or SPTSSB. Within this complex, the heterodimer with SPTLC2 or SPTLC3 forms the catalytic core. The composition of the serine palmitoyltransferase (SPT) complex determines the substrate preference. The SPTLC1-SPTLC2-SPTSSA complex shows a strong preference for C16-CoA substrate, while the SPTLC1-SPTLC3-SPTSSA isozyme uses both C14-CoA and C16-CoA as substrates, with a slight preference for C14-CoA. The SPTLC1-SPTLC2-SPTSSB complex shows a strong preference for C18-CoA substrate, while the SPTLC1-SPTLC3-SPTSSB isozyme displays an ability to use a broader range of acyl-CoAs, without apparent preference. Required for adipocyte cell viability and metabolic homeostasis. The sequence is that of Serine palmitoyltransferase 1 (SPTLC1) from Homo sapiens (Human).